Consider the following 436-residue polypeptide: 3-ketoacyl-CoA thiolase (436 aa).

The active-site Acyl-thioester intermediate is cysteine 99. Residues histidine 392 and cysteine 422 each act as proton acceptor in the active site.

This sequence belongs to the thiolase-like superfamily. Thiolase family. Heterotetramer of two alpha chains (FadJ) and two beta chains (FadI).

The protein resides in the cytoplasm. The catalysed reaction is an acyl-CoA + acetyl-CoA = a 3-oxoacyl-CoA + CoA. Its pathway is lipid metabolism; fatty acid beta-oxidation. Functionally, catalyzes the final step of fatty acid oxidation in which acetyl-CoA is released and the CoA ester of a fatty acid two carbons shorter is formed. In Yersinia enterocolitica serotype O:8 / biotype 1B (strain NCTC 13174 / 8081), this protein is 3-ketoacyl-CoA thiolase.